Here is a 452-residue protein sequence, read N- to C-terminus: Rhodopsin (452 aa).

Residues 1 to 33 (MGRDIPDNETWWYNPYMDIHPHWKQFDQVPAAV) lie on the Extracellular side of the membrane. N-linked (GlcNAc...) asparagine glycosylation occurs at asparagine 8. The chain crosses the membrane as a helical span at residues 34 to 58 (YYSLGIFIAICGIIGCVGNGVVIYL). Topologically, residues 59–70 (FTKTKSLQTPAN) are cytoplasmic. Residues 71-97 (MFIINLAFSDFTFSLVNGFPLMTISCF) form a helical membrane-spanning segment. The Extracellular segment spans residues 98–109 (MKYWVFGNAACK). Cysteines 108 and 186 form a disulfide. Residues 110 to 131 (VYGLIGGIFGLMSIMTMTMISI) form a helical membrane-spanning segment. The 'Ionic lock' involved in activated form stabilization motif lies at 132–134 (DRY). Residues 132 to 151 (DRYNVIGRPMSASKKMSHRK) lie on the Cytoplasmic side of the membrane. A helical transmembrane segment spans residues 152 to 172 (AFIMIIFVWIWSTIWAIGPIF). At 173-199 (GWGAYTLEGVLCNCSFDYITRDTTTRS) the chain is on the extracellular side. The helical transmembrane segment at 200–224 (NILCMYIFAFMCPIVVIFFCYFNIV) threads the bilayer. At 225–261 (MSVSNHEKEMAAMAKRLNAKELRKAQAGANAEMKLAK) the chain is on the cytoplasmic side. A helical membrane pass occupies residues 262–283 (ISIVIVTQFLLSWSPYAVVALL). The Extracellular portion of the chain corresponds to 284–293 (AQFGPIEWVT). A helical membrane pass occupies residues 294 to 315 (PYAAQLPVMFAKASAIHNPMIY). Residue lysine 305 is modified to N6-(retinylidene)lysine. The Cytoplasmic portion of the chain corresponds to 316 to 452 (SVSHPKFRER…QGVDNQAYQA (137 aa)). S-palmitoyl cysteine attachment occurs at residues cysteine 336 and cysteine 337. Disordered regions lie at residues 346-365 (DDKD…GETA) and 376-452 (MMQK…AYQA). The segment covering 376–388 (MMQKMQAQQQQQP) has biased composition (low complexity). The segment covering 389–440 (AYPPQGYPPQGYPPPPPQGYPPQGYPPQGYPPQGYPPPPQGPPPQGPPPQAA) has biased composition (pro residues).

The protein belongs to the G-protein coupled receptor 1 family. Opsin subfamily. Contains one covalently linked retinal chromophore. Upon light absorption, the covalently bound 11-cis-retinal is converted to all-trans-retinal. After hydrolysis of the Schiff base and release of the covalently bound all-trans-retinal, active rhodopsin is regenerated by binding of a fresh molecule of 11-cis-retinal.

It is found in the cell projection. The protein resides in the rhabdomere membrane. Its function is as follows. Photoreceptor required for image-forming vision at low light intensity. Light-induced isomerization of 11-cis to all-trans retinal triggers a conformational change that activates signaling via G-proteins. Signaling mediates the activation of phospholipase C. Subsequent receptor phosphorylation mediates displacement of the bound G-protein alpha subunit by arrestin and terminates signaling. This Loligo forbesii (Veined squid) protein is Rhodopsin (RHO).